Consider the following 454-residue polypeptide: UDP-N-acetylmuramoylalanine--D-glutamate ligase (454 aa).

119–125 (GSNGKTT) serves as a coordination point for ATP.

The protein belongs to the MurCDEF family.

The protein resides in the cytoplasm. It catalyses the reaction UDP-N-acetyl-alpha-D-muramoyl-L-alanine + D-glutamate + ATP = UDP-N-acetyl-alpha-D-muramoyl-L-alanyl-D-glutamate + ADP + phosphate + H(+). The protein operates within cell wall biogenesis; peptidoglycan biosynthesis. Functionally, cell wall formation. Catalyzes the addition of glutamate to the nucleotide precursor UDP-N-acetylmuramoyl-L-alanine (UMA). The polypeptide is UDP-N-acetylmuramoylalanine--D-glutamate ligase (Latilactobacillus sakei subsp. sakei (strain 23K) (Lactobacillus sakei subsp. sakei)).